The sequence spans 302 residues: tRNA-cytidine(32) 2-sulfurtransferase (302 aa).

The short motif at 57 to 62 (SGGKDS) is the PP-loop motif element. Positions 132, 135, and 223 each coordinate [4Fe-4S] cluster.

Belongs to the TtcA family. In terms of assembly, homodimer. Requires Mg(2+) as cofactor. [4Fe-4S] cluster is required as a cofactor.

It localises to the cytoplasm. The enzyme catalyses cytidine(32) in tRNA + S-sulfanyl-L-cysteinyl-[cysteine desulfurase] + AH2 + ATP = 2-thiocytidine(32) in tRNA + L-cysteinyl-[cysteine desulfurase] + A + AMP + diphosphate + H(+). The protein operates within tRNA modification. Functionally, catalyzes the ATP-dependent 2-thiolation of cytidine in position 32 of tRNA, to form 2-thiocytidine (s(2)C32). The sulfur atoms are provided by the cysteine/cysteine desulfurase (IscS) system. The sequence is that of tRNA-cytidine(32) 2-sulfurtransferase from Marinobacter nauticus (strain ATCC 700491 / DSM 11845 / VT8) (Marinobacter aquaeolei).